We begin with the raw amino-acid sequence, 538 residues long: RNA-binding protein RO60 (538 aa).

Residues 16–369 (VPNSEGCYVW…SFKLVEPTGK (354 aa)) enclose the TROVE domain. Positions 120–284 (RIPTHLFTFI…DMPLTALLRN (165 aa)) are RNA-binding. A VWFA-like domain region spans residues 361 to 538 (FKLVEPTGKR…VIRNFTLDLI (178 aa)). Positions 378, 380, and 445 each coordinate a divalent metal cation.

This sequence belongs to the Ro 60 kDa family.

Its subcellular location is the cytoplasm. Its function is as follows. RNA-binding protein that binds to misfolded non-coding RNAs, pre-5S rRNA, and several small cytoplasmic RNA molecules known as Y RNAs. May play roles in cilia formation and/or maintenance. This chain is RNA-binding protein RO60, found in Xenopus laevis (African clawed frog).